A 177-amino-acid polypeptide reads, in one-letter code: Coatomer subunit zeta-3 (177 aa).

The protein belongs to the adaptor complexes small subunit family. Oligomeric complex that consists of at least the alpha, beta, beta', gamma, delta, epsilon and zeta subunits.

It localises to the cytoplasm. The protein localises to the golgi apparatus membrane. The protein resides in the cytoplasmic vesicle. Its subcellular location is the COPI-coated vesicle membrane. The coatomer is a cytosolic protein complex that binds to dilysine motifs and reversibly associates with Golgi non-clathrin-coated vesicles, which further mediate biosynthetic protein transport from the ER, via the Golgi up to the trans Golgi network. Coatomer complex is required for budding from Golgi membranes, and is essential for the retrograde Golgi-to-ER transport of dilysine-tagged proteins. The zeta subunit may be involved in regulating the coat assembly and, hence, the rate of biosynthetic protein transport due to its association-dissociation properties with the coatomer complex. This is Coatomer subunit zeta-3 from Oryza sativa subsp. japonica (Rice).